The sequence spans 38 residues: Large ribosomal subunit protein bL36 (38 aa).

The protein belongs to the bacterial ribosomal protein bL36 family.

This is Large ribosomal subunit protein bL36 from Hahella chejuensis (strain KCTC 2396).